A 336-amino-acid chain; its full sequence is Dihydroorotate dehydrogenase (quinone) (336 aa).

FMN contacts are provided by residues 62-66 (AGMDK) and Thr86. Lys66 provides a ligand contact to substrate. 111 to 115 (NRMGF) contributes to the substrate binding site. FMN is bound by residues Asn139 and Asn172. Asn172 is a substrate binding site. Ser175 acts as the Nucleophile in catalysis. Asn177 is a binding site for substrate. Residues Lys217 and Thr245 each coordinate FMN. 246 to 247 (NT) is a binding site for substrate. Residues Gly268, Gly297, and 318–319 (YS) each bind FMN.

The protein belongs to the dihydroorotate dehydrogenase family. Type 2 subfamily. Monomer. Requires FMN as cofactor.

Its subcellular location is the cell membrane. It carries out the reaction (S)-dihydroorotate + a quinone = orotate + a quinol. The protein operates within pyrimidine metabolism; UMP biosynthesis via de novo pathway; orotate from (S)-dihydroorotate (quinone route): step 1/1. In terms of biological role, catalyzes the conversion of dihydroorotate to orotate with quinone as electron acceptor. The sequence is that of Dihydroorotate dehydrogenase (quinone) from Buchnera aphidicola subsp. Schizaphis graminum (strain Sg).